Consider the following 103-residue polypeptide: Large ribosomal subunit protein bL21 (103 aa).

The protein belongs to the bacterial ribosomal protein bL21 family. As to quaternary structure, part of the 50S ribosomal subunit. Contacts protein L20.

Functionally, this protein binds to 23S rRNA in the presence of protein L20. The protein is Large ribosomal subunit protein bL21 of Polaromonas naphthalenivorans (strain CJ2).